The sequence spans 165 residues: uncharacterized protein (165 aa).

The next 6 helical transmembrane spans lie at 6–26, 28–48, 54–74, 78–98, 110–130, and 138–158; these read ILFP…SGQA, LFSG…AFVY, AVTP…HFFA, WVWW…SLLV, AVSM…MAWL, and ALLK…LLLI.

Its subcellular location is the cell membrane. This is an uncharacterized protein from Bacillus subtilis (strain 168).